Consider the following 364-residue polypeptide: Phospho-N-acetylmuramoyl-pentapeptide-transferase (364 aa).

The next 10 membrane-spanning stretches (helical) occupy residues 3-23 (AILF…RVAI), 51-71 (TMGG…AKLI), 80-100 (ALLL…DDFI), 116-136 (MIGL…SWLE), 154-174 (IGWI…IIAA), 185-205 (LDGL…FVNI), 229-249 (PLDL…FLWW), 256-276 (IFMG…LAIL), 281-301 (LLLI…MLQV), and 341-361 (FWII…AEWV).

It belongs to the glycosyltransferase 4 family. MraY subfamily. The cofactor is Mg(2+).

Its subcellular location is the cell membrane. It catalyses the reaction UDP-N-acetyl-alpha-D-muramoyl-L-alanyl-gamma-D-glutamyl-meso-2,6-diaminopimeloyl-D-alanyl-D-alanine + di-trans,octa-cis-undecaprenyl phosphate = di-trans,octa-cis-undecaprenyl diphospho-N-acetyl-alpha-D-muramoyl-L-alanyl-D-glutamyl-meso-2,6-diaminopimeloyl-D-alanyl-D-alanine + UMP. Its pathway is cell wall biogenesis; peptidoglycan biosynthesis. In terms of biological role, catalyzes the initial step of the lipid cycle reactions in the biosynthesis of the cell wall peptidoglycan: transfers peptidoglycan precursor phospho-MurNAc-pentapeptide from UDP-MurNAc-pentapeptide onto the lipid carrier undecaprenyl phosphate, yielding undecaprenyl-pyrophosphoryl-MurNAc-pentapeptide, known as lipid I. This Nocardioides sp. (strain ATCC BAA-499 / JS614) protein is Phospho-N-acetylmuramoyl-pentapeptide-transferase.